A 219-amino-acid polypeptide reads, in one-letter code: Thymidylate kinase (219 aa).

Position 7–14 (Gly-7–Thr-14) interacts with ATP.

This sequence belongs to the thymidylate kinase family.

The catalysed reaction is dTMP + ATP = dTDP + ADP. Its function is as follows. Phosphorylation of dTMP to form dTDP in both de novo and salvage pathways of dTTP synthesis. This chain is Thymidylate kinase, found in Anaplasma phagocytophilum (strain HZ).